Reading from the N-terminus, the 191-residue chain is UPF0312 protein Sbal195_3198 (191 aa).

A signal peptide spans 1-22; the sequence is MKKQLFSALIGASLLAPMAASA.

It belongs to the UPF0312 family. Type 1 subfamily.

Its subcellular location is the periplasm. The polypeptide is UPF0312 protein Sbal195_3198 (Shewanella baltica (strain OS195)).